The following is a 106-amino-acid chain: Small ribosomal subunit protein uS10 (106 aa).

Belongs to the universal ribosomal protein uS10 family. Part of the 30S ribosomal subunit.

Involved in the binding of tRNA to the ribosomes. The chain is Small ribosomal subunit protein uS10 from Pyrobaculum aerophilum (strain ATCC 51768 / DSM 7523 / JCM 9630 / CIP 104966 / NBRC 100827 / IM2).